Consider the following 190-residue polypeptide: MKAESGSADAKLPLPPPVGRKRRGLAILDFLLRLLAIGATLSAAIAMGTNNETLKFFTQFFQFNARFYNLSAFIYFVIANATVGLYLLLSLPFSIFDIVRPRAAAFRVLLIFFDTVMVAVCTSGAAAATAIMYVARRGNTKTNWFSICQQFNSFCDQATGALGASFAAVVLLILLVLLSASTLHRQRADF.

Residues 1 to 24 (MKAESGSADAKLPLPPPVGRKRRG) lie on the Cytoplasmic side of the membrane. The chain crosses the membrane as a helical span at residues 25–45 (LAILDFLLRLLAIGATLSAAI). The Extracellular portion of the chain corresponds to 46–72 (AMGTNNETLKFFTQFFQFNARFYNLSA). N-linked (GlcNAc...) asparagine glycosylation is found at asparagine 51 and asparagine 69. A helical transmembrane segment spans residues 73 to 93 (FIYFVIANATVGLYLLLSLPF). The Cytoplasmic segment spans residues 94–107 (SIFDIVRPRAAAFR). A helical membrane pass occupies residues 108-128 (VLLIFFDTVMVAVCTSGAAAA). At 129–157 (TAIMYVARRGNTKTNWFSICQQFNSFCDQ) the chain is on the extracellular side. A helical membrane pass occupies residues 158 to 178 (ATGALGASFAAVVLLILLVLL). At 179–190 (SASTLHRQRADF) the chain is on the cytoplasmic side.

This sequence belongs to the Casparian strip membrane proteins (CASP) family. As to quaternary structure, homodimer and heterodimers.

The protein localises to the cell membrane. Its function is as follows. Regulates membrane-cell wall junctions and localized cell wall deposition. Required for establishment of the Casparian strip membrane domain (CSD) and the subsequent formation of Casparian strips, a cell wall modification of the root endodermis that determines an apoplastic barrier between the intraorganismal apoplasm and the extraorganismal apoplasm and prevents lateral diffusion. The chain is Casparian strip membrane protein 1 from Pinus taeda (Loblolly pine).